Consider the following 1430-residue polypeptide: Gag-Pol polyprotein (1430 aa).

G2 is lipidated: N-myristoyl glycine; by host. Residues 7-31 (ILSGGKLDEWEKIQLRPGGKKRYKM) are interaction with Gp41. The segment at 8–43 (LSGGKLDEWEKIQLRPGGKKRYKMKHLIWASRELER) is interaction with host CALM1. Residues 12–19 (KLDEWEKI) form an interaction with host AP3D1 region. The segment at 14–33 (DEWEKIQLRPGGKKRYKMKH) is interaction with membrane phosphatidylinositol 4,5-bisphosphate and RNA. The short motif at 16 to 22 (WEKIQLR) is the Nuclear export signal element. A Nuclear localization signal motif is present at residues 26 to 32 (KKRYKMK). An interaction with membrane phosphatidylinositol 4,5-bisphosphate region spans residues 73-77 (EELKS). Y128 is modified (phosphotyrosine; by host). The segment at 185-223 (NTVGGHQAAMQMLKDTINEEAAEWDRLHPVHAGPAPPGQ) is interaction with human PPIA/CYPA and NUP153. The segment at 273–359 (YSPVSILDIK…GGPSHKARVL (87 aa)) is dimerization/Multimerization of capsid protein p24. 2 CCHC-type zinc fingers span residues 384 to 401 (VKCF…NCRA) and 405 to 422 (KGCW…DCTE). A disordered region spans residues 438–475 (EARKFPSEQTRANSPTSRELRVQRGDNPLSEAGAERRG). The span at 444–454 (SEQTRANSPTS) shows a compositional bias: polar residues. A dimerization of protease region spans residues 483 to 487 (PQITL). A Peptidase A2 domain is found at 502–571 (KEALLDTGAD…TPVNIIGRNM (70 aa)). Catalysis depends on D507, which acts as the For protease activity; shared with dimeric partner. Dimerization of protease regions lie at residues 531 to 537 (GIGGFIK) and 570 to 582 (NMLT…LNFP). The Reverse transcriptase domain maps to 625 to 815 (EGKISKIGPE…PPFLWMGHEL (191 aa)). Mg(2+)-binding residues include D691, D766, and D767. Positions 808–816 (FLWMGHELH) are RT 'primer grip'. The short motif at 980–996 (WDTWWTDYWQATWIPEW) is the Tryptophan repeat motif element. The 124-residue stretch at 1016–1139 (IAGADTFYVD…VDKLVSAGVR (124 aa)) folds into the RNase H type-1 domain. Mg(2+)-binding residues include D1025, E1060, D1080, and D1131. The segment at 1145-1186 (DGIDKAQEEHEKYHNNWRAMASDFNLPPIVAKEIVASCDKCQ) adopts an Integrase-type zinc-finger fold. Zn(2+) contacts are provided by H1154, H1158, C1182, and C1185. The region spanning 1196–1346 (VDCSPGIWQL…SAGERIIDII (151 aa)) is the Integrase catalytic domain. Mg(2+)-binding residues include D1206, D1258, and E1294. The integrase-type DNA-binding region spans 1365-1412 (FRVYYRDSRNPVWKGPAKLLWKGEGAVVIQDNSEIKIVPRRKAKIIRD).

In terms of assembly, homotrimer; further assembles as hexamers of trimers. Interacts with gp41 (via C-terminus). Interacts with host CALM1; this interaction induces a conformational change in the Matrix protein, triggering exposure of the myristate group. Interacts with host AP3D1; this interaction allows the polyprotein trafficking to multivesicular bodies during virus assembly. Part of the pre-integration complex (PIC) which is composed of viral genome, matrix protein, Vpr and integrase. Homodimer; the homodimer further multimerizes as homohexamers or homopentamers. Interacts with human PPIA/CYPA; This interaction stabilizes the capsid. Interacts with human NUP153. Interacts with host PDZD8; this interaction stabilizes the capsid. Interacts with monkey TRIM5; this interaction destabilizes the capsid. As to quaternary structure, homodimer, whose active site consists of two apposed aspartic acid residues. In terms of assembly, heterodimer of p66 RT and p51 RT (RT p66/p51). Heterodimerization of RT is essential for DNA polymerase activity. The overall folding of the subdomains is similar in p66 RT and p51 RT but the spatial arrangements of the subdomains are dramatically different. Homotetramer; may further associate as a homohexadecamer. Part of the pre-integration complex (PIC) which is composed of viral genome, matrix protein, Vpr and integrase. Interacts with human SMARCB1/INI1 and human PSIP1/LEDGF isoform 1. Interacts with human KPNA3; this interaction might play a role in nuclear import of the pre-integration complex. Interacts with human NUP153; this interaction might play a role in nuclear import of the pre-integration complex. Mg(2+) serves as cofactor. In terms of processing, specific enzymatic cleavages by the viral protease yield mature proteins. The protease is released by autocatalytic cleavage. The polyprotein is cleaved during and after budding, this process is termed maturation. Proteolytic cleavage of p66 RT removes the RNase H domain to yield the p51 RT subunit. Nucleocapsid protein p7 might be further cleaved after virus entry. Tyrosine phosphorylated presumably in the virion by a host kinase. Phosphorylation is apparently not a major regulator of membrane association. Post-translationally, phosphorylated possibly by host MAPK1; this phosphorylation is necessary for Pin1-mediated virion uncoating. In terms of processing, methylated by host PRMT6, impairing its function by reducing RNA annealing and the initiation of reverse transcription.

The protein localises to the host cell membrane. Its subcellular location is the host endosome. It localises to the host multivesicular body. It is found in the virion membrane. The protein resides in the host nucleus. The protein localises to the host cytoplasm. Its subcellular location is the virion. The enzyme catalyses Specific for a P1 residue that is hydrophobic, and P1' variable, but often Pro.. The catalysed reaction is Endohydrolysis of RNA in RNA/DNA hybrids. Three different cleavage modes: 1. sequence-specific internal cleavage of RNA. Human immunodeficiency virus type 1 and Moloney murine leukemia virus enzymes prefer to cleave the RNA strand one nucleotide away from the RNA-DNA junction. 2. RNA 5'-end directed cleavage 13-19 nucleotides from the RNA end. 3. DNA 3'-end directed cleavage 15-20 nucleotides away from the primer terminus.. It catalyses the reaction 3'-end directed exonucleolytic cleavage of viral RNA-DNA hybrid.. It carries out the reaction DNA(n) + a 2'-deoxyribonucleoside 5'-triphosphate = DNA(n+1) + diphosphate. With respect to regulation, protease: The viral protease is inhibited by many synthetic protease inhibitors (PIs), such as amprenavir, atazanavir, indinavir, loprinavir, nelfinavir, ritonavir and saquinavir. Use of protease inhibitors in tritherapy regimens permit more ambitious therapeutic strategies. Reverse transcriptase/ribonuclease H: RT can be inhibited either by nucleoside RT inhibitors (NRTIs) or by non nucleoside RT inhibitors (NNRTIs). NRTIs act as chain terminators, whereas NNRTIs inhibit DNA polymerization by binding a small hydrophobic pocket near the RT active site and inducing an allosteric change in this region. Classical NRTIs are abacavir, adefovir (PMEA), didanosine (ddI), lamivudine (3TC), stavudine (d4T), tenofovir (PMPA), zalcitabine (ddC), and zidovudine (AZT). Classical NNRTIs are atevirdine (BHAP U-87201E), delavirdine, efavirenz (DMP-266), emivirine (I-EBU), and nevirapine (BI-RG-587). The tritherapies used as a basic effective treatment of AIDS associate two NRTIs and one NNRTI. In terms of biological role, mediates, with Gag polyprotein, the essential events in virion assembly, including binding the plasma membrane, making the protein-protein interactions necessary to create spherical particles, recruiting the viral Env proteins, and packaging the genomic RNA via direct interactions with the RNA packaging sequence (Psi). Gag-Pol polyprotein may regulate its own translation, by the binding genomic RNA in the 5'-UTR. At low concentration, the polyprotein would promote translation, whereas at high concentration, the polyprotein would encapsidate genomic RNA and then shut off translation. Its function is as follows. Targets the polyprotein to the plasma membrane via a multipartite membrane-binding signal, that includes its myristoylated N-terminus. Matrix protein is part of the pre-integration complex. Implicated in the release from host cell mediated by Vpu. Binds to RNA. Functionally, forms the conical core that encapsulates the genomic RNA-nucleocapsid complex in the virion. Most core are conical, with only 7% tubular. The core is constituted by capsid protein hexamer subunits. The core is disassembled soon after virion entry. Host restriction factors such as TRIM5-alpha or TRIMCyp bind retroviral capsids and cause premature capsid disassembly, leading to blocks in reverse transcription. Capsid restriction by TRIM5 is one of the factors which restricts HIV-1 to the human species. Host PIN1 apparently facilitates the virion uncoating. On the other hand, interactions with PDZD8 or CYPA stabilize the capsid. Encapsulates and protects viral dimeric unspliced genomic RNA (gRNA). Binds these RNAs through its zinc fingers. Acts as a nucleic acid chaperone which is involved in rearangement of nucleic acid secondary structure during gRNA retrotranscription. Also facilitates template switch leading to recombination. As part of the polyprotein, participates in gRNA dimerization, packaging, tRNA incorporation and virion assembly. In terms of biological role, aspartyl protease that mediates proteolytic cleavages of Gag and Gag-Pol polyproteins during or shortly after the release of the virion from the plasma membrane. Cleavages take place as an ordered, step-wise cascade to yield mature proteins. This process is called maturation. Displays maximal activity during the budding process just prior to particle release from the cell. Also cleaves Nef and Vif, probably concomitantly with viral structural proteins on maturation of virus particles. Hydrolyzes host EIF4GI and PABP1 in order to shut off the capped cellular mRNA translation. The resulting inhibition of cellular protein synthesis serves to ensure maximal viral gene expression and to evade host immune response. Also mediates cleavage of host YTHDF3. Mediates cleavage of host CARD8, thereby activating the CARD8 inflammasome, leading to the clearance of latent HIV-1 in patient CD4(+) T-cells after viral reactivation; in contrast, HIV-1 can evade CARD8-sensing when its protease remains inactive in infected cells prior to viral budding. Its function is as follows. Multifunctional enzyme that converts the viral RNA genome into dsDNA in the cytoplasm, shortly after virus entry into the cell. This enzyme displays a DNA polymerase activity that can copy either DNA or RNA templates, and a ribonuclease H (RNase H) activity that cleaves the RNA strand of RNA-DNA heteroduplexes in a partially processive 3' to 5' endonucleasic mode. Conversion of viral genomic RNA into dsDNA requires many steps. A tRNA(3)-Lys binds to the primer-binding site (PBS) situated at the 5'-end of the viral RNA. RT uses the 3' end of the tRNA primer to perform a short round of RNA-dependent minus-strand DNA synthesis. The reading proceeds through the U5 region and ends after the repeated (R) region which is present at both ends of viral RNA. The portion of the RNA-DNA heteroduplex is digested by the RNase H, resulting in a ssDNA product attached to the tRNA primer. This ssDNA/tRNA hybridizes with the identical R region situated at the 3' end of viral RNA. This template exchange, known as minus-strand DNA strong stop transfer, can be either intra- or intermolecular. RT uses the 3' end of this newly synthesized short ssDNA to perform the RNA-dependent minus-strand DNA synthesis of the whole template. RNase H digests the RNA template except for two polypurine tracts (PPTs) situated at the 5'-end and near the center of the genome. It is not clear if both polymerase and RNase H activities are simultaneous. RNase H probably can proceed both in a polymerase-dependent (RNA cut into small fragments by the same RT performing DNA synthesis) and a polymerase-independent mode (cleavage of remaining RNA fragments by free RTs). Secondly, RT performs DNA-directed plus-strand DNA synthesis using the PPTs that have not been removed by RNase H as primers. PPTs and tRNA primers are then removed by RNase H. The 3' and 5' ssDNA PBS regions hybridize to form a circular dsDNA intermediate. Strand displacement synthesis by RT to the PBS and PPT ends produces a blunt ended, linear dsDNA copy of the viral genome that includes long terminal repeats (LTRs) at both ends. Functionally, catalyzes viral DNA integration into the host chromosome, by performing a series of DNA cutting and joining reactions. This enzyme activity takes place after virion entry into a cell and reverse transcription of the RNA genome in dsDNA. The first step in the integration process is 3' processing. This step requires a complex comprising the viral genome, matrix protein, Vpr and integrase. This complex is called the pre-integration complex (PIC). The integrase protein removes 2 nucleotides from each 3' end of the viral DNA, leaving recessed CA OH's at the 3' ends. In the second step, the PIC enters cell nucleus. This process is mediated through integrase and Vpr proteins, and allows the virus to infect a non dividing cell. This ability to enter the nucleus is specific of lentiviruses, other retroviruses cannot and rely on cell division to access cell chromosomes. In the third step, termed strand transfer, the integrase protein joins the previously processed 3' ends to the 5' ends of strands of target cellular DNA at the site of integration. The 5'-ends are produced by integrase-catalyzed staggered cuts, 5 bp apart. A Y-shaped, gapped, recombination intermediate results, with the 5'-ends of the viral DNA strands and the 3' ends of target DNA strands remaining unjoined, flanking a gap of 5 bp. The last step is viral DNA integration into host chromosome. This involves host DNA repair synthesis in which the 5 bp gaps between the unjoined strands are filled in and then ligated. Since this process occurs at both cuts flanking the HIV genome, a 5 bp duplication of host DNA is produced at the ends of HIV-1 integration. Alternatively, Integrase may catalyze the excision of viral DNA just after strand transfer, this is termed disintegration. This Homo sapiens (Human) protein is Gag-Pol polyprotein (gag-pol).